The primary structure comprises 448 residues: Glutamyl-tRNA reductase (448 aa).

Substrate contacts are provided by residues 49 to 52, serine 109, 114 to 116, and glutamine 120; these read TCNR and ETQ. The Nucleophile role is filled by cysteine 50. Position 189-194 (189-194) interacts with NADP(+); it reads GAGEMS.

The protein belongs to the glutamyl-tRNA reductase family. Homodimer.

The enzyme catalyses (S)-4-amino-5-oxopentanoate + tRNA(Glu) + NADP(+) = L-glutamyl-tRNA(Glu) + NADPH + H(+). The protein operates within porphyrin-containing compound metabolism; protoporphyrin-IX biosynthesis; 5-aminolevulinate from L-glutamyl-tRNA(Glu): step 1/2. Functionally, catalyzes the NADPH-dependent reduction of glutamyl-tRNA(Glu) to glutamate 1-semialdehyde (GSA). The polypeptide is Glutamyl-tRNA reductase (Staphylococcus aureus (strain Mu3 / ATCC 700698)).